The chain runs to 239 residues: Leucine-rich repeat-containing protein 57 (239 aa).

Residue G2 is the site of N-myristoyl glycine attachment. 8 LRR repeats span residues 39–60 (NLRTIDLSNNKIDSLPPLIIGK), 63–85 (LLKSLSLNNNKLTVLPDELCNLK), 86–107 (KLETLSLNNNHLRELPSTFGQL), 109–130 (ALKTLSLSGNQLGALPPQLCCL), 132–153 (HLDVVDLSKNQIRSIPDTVGEL), 154–175 (QAIELNLNQNQISQLSVKISCC), 177–197 (RLKVLRLEENCLELSMLPQSI), and 202–222 (QICLLAVEGNLFEIKKFRELE).

The protein localises to the membrane. This is Leucine-rich repeat-containing protein 57 (Lrrc57) from Mus musculus (Mouse).